Here is a 593-residue protein sequence, read N- to C-terminus: Aspartate--tRNA(Asp/Asn) ligase (593 aa).

Glu172 is a binding site for L-aspartate. Residues 196–199 form an aspartate region; sequence QLFK. Residue Arg218 coordinates L-aspartate. ATP is bound by residues 218–220 and Gln227; that span reads RDE. An L-aspartate-binding site is contributed by His450. ATP is bound at residue Glu484. Arg491 is a binding site for L-aspartate. 536–539 provides a ligand contact to ATP; sequence GLDR.

Belongs to the class-II aminoacyl-tRNA synthetase family. Type 1 subfamily. In terms of assembly, homodimer.

It localises to the cytoplasm. The catalysed reaction is tRNA(Asx) + L-aspartate + ATP = L-aspartyl-tRNA(Asx) + AMP + diphosphate. Aspartyl-tRNA synthetase with relaxed tRNA specificity since it is able to aspartylate not only its cognate tRNA(Asp) but also tRNA(Asn). Reaction proceeds in two steps: L-aspartate is first activated by ATP to form Asp-AMP and then transferred to the acceptor end of tRNA(Asp/Asn). The chain is Aspartate--tRNA(Asp/Asn) ligase from Nitrosomonas europaea (strain ATCC 19718 / CIP 103999 / KCTC 2705 / NBRC 14298).